An 806-amino-acid chain; its full sequence is Phenylalanine--tRNA ligase beta subunit (806 aa).

A tRNA-binding domain is found at 40 to 153; it reads FNSPDYLQLA…ADAIIIDHVS (114 aa). Positions 413–487 constitute a B5 domain; sequence PFSKKLTVNF…KLIDINKLKP (75 aa). 4 residues coordinate Mg(2+): aspartate 465, aspartate 471, glutamate 474, and glutamate 475.

The protein belongs to the phenylalanyl-tRNA synthetase beta subunit family. Type 1 subfamily. As to quaternary structure, tetramer of two alpha and two beta subunits. Mg(2+) is required as a cofactor.

It localises to the cytoplasm. It catalyses the reaction tRNA(Phe) + L-phenylalanine + ATP = L-phenylalanyl-tRNA(Phe) + AMP + diphosphate + H(+). This Mycoplasma genitalium (strain ATCC 33530 / DSM 19775 / NCTC 10195 / G37) (Mycoplasmoides genitalium) protein is Phenylalanine--tRNA ligase beta subunit (pheT).